Here is a 548-residue protein sequence, read N- to C-terminus: Probable malate:quinone oxidoreductase (548 aa).

Residues 520–548 are disordered; sequence YDRPQAADSTPKPQLKPQPVQKEVADIAL. Residues 530-541 are compositionally biased toward low complexity; sequence PKPQLKPQPVQK.

The protein belongs to the MQO family. FAD is required as a cofactor.

The catalysed reaction is (S)-malate + a quinone = a quinol + oxaloacetate. Its pathway is carbohydrate metabolism; tricarboxylic acid cycle; oxaloacetate from (S)-malate (quinone route): step 1/1. This is Probable malate:quinone oxidoreductase from Shigella dysenteriae serotype 1 (strain Sd197).